The primary structure comprises 178 residues: Cytidylate kinase 2 (178 aa).

7–15 contributes to the ATP binding site; it reads GKSGCGNTT.

Belongs to the cytidylate kinase family. Type 2 subfamily.

The protein localises to the cytoplasm. The catalysed reaction is CMP + ATP = CDP + ADP. It carries out the reaction dCMP + ATP = dCDP + ADP. This is Cytidylate kinase 2 from Borrelia garinii subsp. bavariensis (strain ATCC BAA-2496 / DSM 23469 / PBi) (Borreliella bavariensis).